A 192-amino-acid chain; its full sequence is UPF0301 protein BMA10247_1859 (192 aa).

It belongs to the UPF0301 (AlgH) family.

This chain is UPF0301 protein BMA10247_1859, found in Burkholderia mallei (strain NCTC 10247).